The primary structure comprises 118 residues: Vitelline membrane protein Vm32E (118 aa).

An N-terminal signal peptide occupies residues 1 to 17 (MKIVALTLVAFVALAGA). The region spanning 36 to 75 (GYPAPPCPTNYLFSCQPNLAPAPCAQEAQAPAYGSAGAYT) is the VM domain.

Belongs to the vitelline membrane family.

Its subcellular location is the secreted. In terms of biological role, major early eggshell protein. In Drosophila mauritiana (Fruit fly), this protein is Vitelline membrane protein Vm32E.